A 200-amino-acid polypeptide reads, in one-letter code: Large ribosomal subunit protein uL4 (200 aa).

A disordered region spans residues G38–G80.

The protein belongs to the universal ribosomal protein uL4 family. In terms of assembly, part of the 50S ribosomal subunit.

Functionally, one of the primary rRNA binding proteins, this protein initially binds near the 5'-end of the 23S rRNA. It is important during the early stages of 50S assembly. It makes multiple contacts with different domains of the 23S rRNA in the assembled 50S subunit and ribosome. Its function is as follows. Forms part of the polypeptide exit tunnel. The polypeptide is Large ribosomal subunit protein uL4 (Stutzerimonas stutzeri (strain A1501) (Pseudomonas stutzeri)).